Consider the following 1448-residue polypeptide: Probable serine/threonine-protein kinase irlB (1448 aa).

Positions 412 to 423 (DDDDYDDYDDDD) are enriched in acidic residues. The tract at residues 412 to 446 (DDDDYDDYDDDDDHHSGCNNNNNNNNDGDHNEDEN) is disordered. The segment covering 428–437 (GCNNNNNNNN) has biased composition (low complexity). Coiled-coil stretches lie at residues 666 to 817 (AESE…EIQN), 887 to 921 (EIQL…SNMK), and 974 to 1016 (ENNK…QDED). Positions 975–1008 (NNKKQNLINDNNNNNNNNNNNNNNNNNNNNNNKL) are disordered. Over residues 978-1008 (KQNLINDNNNNNNNNNNNNNNNNNNNNNNKL) the composition is skewed to low complexity. A Protein kinase domain is found at 1027–1293 (RNESNILGRG…IQNVLNHPLF (267 aa)). ATP contacts are provided by residues 1033–1041 (LGRGSNGTL) and Lys-1056. Catalysis depends on Asp-1151, which acts as the Proton acceptor. Residues 1296–1448 (LEKKIQFIDA…TIDYLFNFYN (153 aa)) enclose the KEN domain.

Belongs to the protein kinase superfamily. Ser/Thr protein kinase family.

It catalyses the reaction L-seryl-[protein] + ATP = O-phospho-L-seryl-[protein] + ADP + H(+). The catalysed reaction is L-threonyl-[protein] + ATP = O-phospho-L-threonyl-[protein] + ADP + H(+). The chain is Probable serine/threonine-protein kinase irlB (irlB-1) from Dictyostelium discoideum (Social amoeba).